Here is a 111-residue protein sequence, read N- to C-terminus: ATP-dependent Clp protease adapter protein ClpS (111 aa).

It belongs to the ClpS family. Binds to the N-terminal domain of the chaperone ClpA.

Involved in the modulation of the specificity of the ClpAP-mediated ATP-dependent protein degradation. The chain is ATP-dependent Clp protease adapter protein ClpS from Corynebacterium aurimucosum (strain ATCC 700975 / DSM 44827 / CIP 107346 / CN-1) (Corynebacterium nigricans).